Here is a 781-residue protein sequence, read N- to C-terminus: N-acetylneuraminate (7)9-O-acetyltransferase (781 aa).

Topologically, residues 1–15 (MAVLAYNLGKREINQ) are cytoplasmic. The helical transmembrane segment at 16 to 36 (YFSIKNAKLLAAAAVVLLTVF) threads the bilayer. The Lumenal portion of the chain corresponds to 37 to 308 (HAASRHYGSS…SAPPLSVLQK (272 aa)). The active-site Acyl-ester intermediate is the S94. Residues N139, N185, and N239 are each glycosylated (N-linked (GlcNAc...) asparagine). Active-site residues include D264 and H267. Residues 309–329 (LAAAVLLVSVVCFVLLGFSSH) form a helical membrane-spanning segment. Residues 330–350 (RKSRPAPDVESGEEKKHPAAV) are disordered. The Cytoplasmic portion of the chain corresponds to 330 to 354 (RKSRPAPDVESGEEKKHPAAVGQLN). Residues 355–375 (PKGPLLAIGKMSLIMLYFYLC) form a helical membrane-spanning segment. Topologically, residues 376–386 (DRADIFMKEQK) are lumenal. Residues 387–407 (FYTHSAFFIPLIYIFVLGVFY) form a helical membrane-spanning segment. At 408 to 430 (SENSKETKLLNREQTDEWKGWMQ) the chain is on the cytoplasmic side. Residues 431–451 (LVILIYHISGASAFIPVYMHV) form a helical membrane-spanning segment. Residue R452 is a topological domain, lumenal. Residues 453 to 473 (VLVAAYLFQTGYGHFSFFWLK) traverse the membrane as a helical segment. Residues 474 to 477 (GDFG) lie on the Cytoplasmic side of the membrane. Residues 478 to 498 (LYRVCQVLFRLNFLVVVLCLV) traverse the membrane as a helical segment. Residues 499 to 504 (MDRPYQ) are Lumenal-facing. A helical transmembrane segment spans residues 505-525 (FYYFVPLVTFWFAVIYATMAL). Residues 526–537 (WPQILQKQANGS) are Cytoplasmic-facing. The helical transmembrane segment at 538-558 (AFWNLALLLKLLGLLLFIGFF) threads the bilayer. The Lumenal segment spans residues 559-595 (AYSQELFEGIFSVWPLSKLFELQGSIHEWWFRWKLDR). Residues 596–616 (FAVVNGMLFAFIYLLLQKYQL) form a helical membrane-spanning segment. The Cytoplasmic segment spans residues 617–629 (LSEGKGEPLFSNK). Residues 630–650 (ISNCLLFVSVVSFMTYSIWAS) traverse the membrane as a helical segment. The Lumenal segment spans residues 651–660 (GCKNKSECNE). A glycan (N-linked (GlcNAc...) asparagine) is linked at N654. The chain crosses the membrane as a helical span at residues 661-681 (MHPYISVILAFILIRNIPGYA). The Cytoplasmic segment spans residues 682–687 (RSLYSS). A helical membrane pass occupies residues 688-708 (FFAWFGKISLELFICQYHIWL). At 709–714 (AADTKG) the chain is on the lumenal side. The helical transmembrane segment at 715–735 (ILVLIPGNPTLNIIVSTFIFV) threads the bilayer. At 736–756 (CVAHEISQITNDLAQVAIPKE) the chain is on the cytoplasmic side. The helical transmembrane segment at 757–777 (SGPLLKRLLGAGVFLVLVLTL) threads the bilayer. Residues 778–781 (SQKD) lie on the Lumenal side of the membrane.

It belongs to the PC-esterase family. CASD1 subfamily.

Its subcellular location is the golgi apparatus membrane. It carries out the reaction CMP-N-acetyl-beta-neuraminate + acetyl-CoA = CMP-N-acetyl-9-O-acetyl-beta-neuraminate + CoA. The enzyme catalyses a ganglioside GD3 (d18:1(4E)) + acetyl-CoA = a ganglioside Ac-O-7-GD3(d18:1(4E)) + CoA. The catalysed reaction is CMP-N-acetyl-beta-neuraminate + acetyl-CoA = CMP-N-acetyl-7-O-acetyl-beta-neuraminate + CoA. Its function is as follows. Key enzyme in the biosynthesis of O-acetylated (O-Ac) sialoglycans such as gangliosides O-AcGD3 and O-AcGD2, which affect various processes such as cell-cell interactions, host-pathogen recognition. Catalyzes the transfer of an acetyl group from a donor, the acetyl-coenzyme-A molecule (acetyl-CoA), to the C7/8/9 OH-position of a sialic acid residue. The primary site of O-acetyl group transfer on sialic acid seems to depend on cell type and can be C7, from which the O-acetyl group could subsequently migrate to the C8 and then to the C9 position, or at C9 with possibility of migrating to the C8 and then to the C7 position. Together with ST8SIA1 (GD3 synthase) it increases the levels of ganglioside Ac-O-7-GD3. Can transfer the acetyl group from acetyl-CoA to free sialate (N-acetylneuraminate, Neu5Ac) in vitro, but has preferred substrate specificity for CMP-activated sialate (CMP-Neu5Ac), resulting in the formation of 9-O-acetylated CMP-Neu5Ac (CMP-Neu5,9Ac2). CMP-Neu5,9Ac2 may be used by sialyltransferases as a sialate donor for glycoconjugate acceptors such as ganglioside GD3. O-acetylation at position C9 of ganglioside GD3 can counteract the pro-apoptotic effects of the ganglioside GD3 in tumor cells. This is N-acetylneuraminate (7)9-O-acetyltransferase from Danio rerio (Zebrafish).